The chain runs to 299 residues: Protease HtpX homolog (299 aa).

The next 2 helical transmembrane spans lie at 14-34 and 39-59; these read WLLL…VGYL and GFGG…TMIF. His-143 provides a ligand contact to Zn(2+). Glu-144 is a catalytic residue. His-147 contributes to the Zn(2+) binding site. The next 2 membrane-spanning stretches (helical) occupy residues 153–173 and 198–218; these read IRIS…AVMA and IILL…ATLV. Zn(2+) is bound at residue Glu-227.

The protein belongs to the peptidase M48B family. Zn(2+) is required as a cofactor.

Its subcellular location is the cell membrane. The chain is Protease HtpX homolog from Streptococcus thermophilus (strain CNRZ 1066).